A 98-amino-acid polypeptide reads, in one-letter code: HIG1 domain family member 1B (98 aa).

The Cytoplasmic portion of the chain corresponds to 1–28 (MSANKGWWVPPEGEDNLSKKFLRKTRES). The HIG1 domain maps to 1–94 (MSANKGWWVP…YRDYIKRVSE (94 aa)). Residues 29–46 (PLVPIGVAGCLVIAAYRI) form a helical membrane-spanning segment. Residues 47–60 (YRLKARGSTKLSIH) are Extracellular-facing. The chain crosses the membrane as a helical span at residues 61-83 (LIHTRVAAQACAVGAIMLGAMYT). Topologically, residues 84-98 (MYRDYIKRVSEDAEK) are cytoplasmic.

It localises to the membrane. This is HIG1 domain family member 1B (Higd1b) from Mus musculus (Mouse).